The following is a 467-amino-acid chain: Rhamnulokinase (467 aa).

11-15 (ASSGR) is an ATP binding site. Substrate-binding positions include alanine 78 and 235 to 237 (HDT). Aspartate 236 functions as the Proton acceptor in the catalytic mechanism. Threonine 257 lines the ATP pocket. Residue asparagine 294 participates in substrate binding. Glutamine 302 is a binding site for ATP. Cysteine 351 and cysteine 368 are oxidised to a cystine. Glycine 400 is a binding site for ATP.

This sequence belongs to the rhamnulokinase family. It depends on Mg(2+) as a cofactor.

The catalysed reaction is L-rhamnulose + ATP = L-rhamnulose 1-phosphate + ADP + H(+). It functions in the pathway carbohydrate degradation; L-rhamnose degradation; glycerone phosphate from L-rhamnose: step 2/3. Its function is as follows. Involved in the catabolism of L-rhamnose (6-deoxy-L-mannose). Catalyzes the transfer of the gamma-phosphate group from ATP to the 1-hydroxyl group of L-rhamnulose to yield L-rhamnulose 1-phosphate. The polypeptide is Rhamnulokinase (Halalkalibacterium halodurans (strain ATCC BAA-125 / DSM 18197 / FERM 7344 / JCM 9153 / C-125) (Bacillus halodurans)).